We begin with the raw amino-acid sequence, 351 residues long: Delta(7)-sterol 5(6)-desaturase (351 aa).

3 consecutive transmembrane segments (helical) span residues 88–108, 136–156, and 173–193; these read LSLF…VASF, GLGA…LELH, and VRLA…IYLL. The Fatty acid hydroxylase domain maps to 180–305; that stretch reads LFFILFTDFG…FTTLWDRLGG (126 aa). The Histidine box-1 motif lies at 194 to 198; it reads HRWLH. Residues 207 to 211 carry the Histidine box-2 motif; the sequence is HKKHH. A helical transmembrane segment spans residues 237 to 257; it reads HLFPMLFPLHKVSYLVLFTFV. The Histidine box-3 signature appears at 282-286; it reads HTVHH.

Belongs to the sterol desaturase family. Fe cation is required as a cofactor.

The protein resides in the endoplasmic reticulum membrane. It carries out the reaction a Delta(7)-sterol + 2 Fe(II)-[cytochrome b5] + O2 + 2 H(+) = a Delta(5),Delta(7)-sterol + 2 Fe(III)-[cytochrome b5] + 2 H2O. It functions in the pathway steroid metabolism; ergosterol biosynthesis; ergosterol from zymosterol: step 3/5. Functionally, catalyzes the introduction of a C-5 double bond in the B ring of ergosterol. May contribute to the regulation of ergosterol biosynthesis. This Eremothecium gossypii (strain ATCC 10895 / CBS 109.51 / FGSC 9923 / NRRL Y-1056) (Yeast) protein is Delta(7)-sterol 5(6)-desaturase (ERG3).